Reading from the N-terminus, the 820-residue chain is Scavenger receptor class F member 1 (820 aa).

Positions 1–23 (MLAAMGLELVFSLLLLWTQGTQG) are cleaved as a signal peptide. Over 24–422 (STLDPAGQHV…TCQLGRHGKN (399 aa)) the chain is Extracellular. EGF-like domains lie at 56–90 (TIPICEGPDACRKEEVCVKPGLCRCKPGFFGAQCS), 98–133 (WGHDCRETCPCHPRGQCEPATGDCQCQPNYWGRLCE), 163–193 (RRPCQCNPASRCDQATGTCVCPPGWWGRRCS), and 217–251 (WGPECSRKCQCVRGQCSVTSGHCSCPPGFHGIRCE). 12 cysteine pairs are disulfide-bonded: Cys60–Cys72, Cys66–Cys78, Cys80–Cys89, Cys102–Cys114, Cys108–Cys121, Cys123–Cys132, Cys166–Cys174, Cys168–Cys181, Cys183–Cys192, Cys221–Cys232, Cys225–Cys239, and Cys241–Cys250. N-linked (GlcNAc...) asparagine glycosylation occurs at Asn291. 2 consecutive EGF-like domains span residues 304 to 341 (FGERCTGQCPRCRLGEPCQAETGHCQHCDPGWLGHRCE) and 353 to 384 (CSSTCPACAQGTCDAVTGECVCSAGYWGTSCN). The helical transmembrane segment at 423–443 (ALIVGILVPLLLLLMGIVCCA) threads the bilayer. Over 444–820 (YCCSGTRLDP…VVPMSVPPQH (377 aa)) the chain is Cytoplasmic. 2 disordered regions span residues 549–685 (PMAQ…IQES) and 715–820 (NYQK…PPQH). Ser590 and Ser607 each carry phosphoserine. Acidic residues predominate over residues 631-648 (QEAEESTGPEQVNTEEDA). Residues 650 to 662 (TATSSGDPATSHG) are compositionally biased toward polar residues.

Heterophilic interaction with SREC2 via its extracellular domain. The heterophilic interaction is suppressed by the presence of ligand such as Ac-LDL. Interacts with AVIL; the interaction occurs in embryonic dorsal root ganglions at 18 dpc and induces neurite-like outgrowth. In terms of tissue distribution, expressed weakly in brain, spinal cord and dorsal root ganglions.

The protein localises to the membrane. Functionally, mediates the binding and degradation of acetylated low density lipoprotein (Ac-LDL). Mediates heterophilic interactions, suggesting a function as adhesion protein. Plays a role in the regulation of neurite-like outgrowth. This is Scavenger receptor class F member 1 (Scarf1) from Mus musculus (Mouse).